The sequence spans 768 residues: Gephyrin (768 aa).

The tract at residues 14 to 166 (QIRVGVLTVS…LPGSKKGSQE (153 aa)) is MPT Mo-transferase. An interaction with GABARAP region spans residues 153–348 (LIINLPGSKK…VDITKVARRH (196 aa)). 2 disordered regions span residues 194 to 245 (DELE…DSSS) and 273 to 316 (TASL…ASRV). A compositionally biased stretch (pro residues) spans 200 to 212 (PSPPPPLSPPPTT). Phosphoserine occurs at positions 201 and 207. At Thr211 the chain carries Phosphothreonine. Ser213 is subject to Phosphoserine. Cys225 is lipidated: S-palmitoyl cysteine. The segment covering 274-299 (ASLSTTPSESPRAQATSRLSTASCPT) has biased composition (polar residues). Ser275 carries the post-translational modification Phosphoserine. Thr278 and Thr279 each carry phosphothreonine. A phosphoserine mark is found at Ser281 and Ser283. Residue Cys297 is the site of S-palmitoyl cysteine attachment. The tract at residues 326–768 (SSKENILRAS…VVDVMVIGRL (443 aa)) is MPT adenylyltransferase. Ser337 is modified (phosphoserine).

The protein in the N-terminal section; belongs to the MoaB/Mog family. It in the C-terminal section; belongs to the MoeA family. In terms of assembly, homotrimer, homodimer and homooligomer. Interacts with SRGAP2 (via SH3 domain). Interacts with GLRB. Interacts with GABARAP. Interacts with GABRA3. GABRA3 and GLRB occupy overlapping binding sites. Interacts with ARHGAP32; IQSEC3, INSYN1 and INSYN2A. The cofactor is Mg(2+). Post-translationally, phosphorylated. Palmitoylated. Palmitoylation is stimulated by GABA type A receptors activity. Palmitoylation by ZDHHC12 regulates clustering at synapses. As to expression, expressed in tissues including spinal cord, brain, liver, kidney and lung.

The protein resides in the postsynaptic cell membrane. The protein localises to the cell membrane. Its subcellular location is the cytoplasm. It localises to the cytosol. It is found in the cytoskeleton. The protein resides in the cell projection. The protein localises to the dendrite. Its subcellular location is the postsynaptic density. It carries out the reaction molybdopterin + ATP + H(+) = adenylyl-molybdopterin + diphosphate. The enzyme catalyses adenylyl-molybdopterin + molybdate = Mo-molybdopterin + AMP + H(+). It functions in the pathway cofactor biosynthesis; molybdopterin biosynthesis. With respect to regulation, inhibited by copper and tungsten. In terms of biological role, microtubule-associated protein involved in membrane protein-cytoskeleton interactions. It is thought to anchor the inhibitory glycine receptor (GLYR) to subsynaptic microtubules. Acts as a major instructive molecule at inhibitory synapses, where it also clusters GABA type A receptors. Functionally, also has a catalytic activity and catalyzes two steps in the biosynthesis of the molybdenum cofactor. In the first step, molybdopterin is adenylated. Subsequently, molybdate is inserted into adenylated molybdopterin and AMP is released. The protein is Gephyrin (Gphn) of Rattus norvegicus (Rat).